Reading from the N-terminus, the 414-residue chain is 2,3-bisphosphoglycerate-independent phosphoglycerate mutase (414 aa).

It belongs to the BPG-independent phosphoglycerate mutase family. A-PGAM subfamily.

It catalyses the reaction (2R)-2-phosphoglycerate = (2R)-3-phosphoglycerate. The protein operates within carbohydrate degradation; glycolysis; pyruvate from D-glyceraldehyde 3-phosphate: step 3/5. Functionally, catalyzes the interconversion of 2-phosphoglycerate and 3-phosphoglycerate. This is 2,3-bisphosphoglycerate-independent phosphoglycerate mutase from Saccharolobus islandicus (strain M.14.25 / Kamchatka #1) (Sulfolobus islandicus).